We begin with the raw amino-acid sequence, 244 residues long: 5'-deoxynucleotidase (244 aa).

The enzyme catalyses a 2'-deoxyribonucleoside 5'-phosphate + H2O = a 2'-deoxyribonucleoside + phosphate. Following host DNA degradation, is responsible for the degradation of 5'-dNMP's to deoxynucleosides that can be further excreted. Active on deoxynucleoside 5'-monophosphates but not active as a phosphatase on ribonucleotides, deoxynucleoside 5'-triphosphates, deoxynucleoside 3'-monophosphates, or deoxyoligonucleotides. The polypeptide is 5'-deoxynucleotidase (dmp) (Escherichia coli (Enterobacteria phage T5)).